The sequence spans 482 residues: Ribosomal RNA small subunit methyltransferase F (482 aa).

S-adenosyl-L-methionine-binding positions include 119–125 (ASAPGSK), E143, D170, and D188. C241 functions as the Nucleophile in the catalytic mechanism.

The protein belongs to the class I-like SAM-binding methyltransferase superfamily. RsmB/NOP family.

The protein resides in the cytoplasm. It catalyses the reaction cytidine(1407) in 16S rRNA + S-adenosyl-L-methionine = 5-methylcytidine(1407) in 16S rRNA + S-adenosyl-L-homocysteine + H(+). Functionally, specifically methylates the cytosine at position 1407 (m5C1407) of 16S rRNA. The protein is Ribosomal RNA small subunit methyltransferase F of Shewanella sp. (strain ANA-3).